Here is a 231-residue protein sequence, read N- to C-terminus: DNA mismatch repair protein MutH (231 aa).

The protein belongs to the MutH family.

It localises to the cytoplasm. In terms of biological role, sequence-specific endonuclease that cleaves unmethylated GATC sequences. It is involved in DNA mismatch repair. In Salmonella typhi, this protein is DNA mismatch repair protein MutH.